The following is a 271-amino-acid chain: Phosphate import ATP-binding protein PstB (271 aa).

The region spanning methionine 24–isoleucine 266 is the ABC transporter domain. An ATP-binding site is contributed by glycine 56–serine 63.

It belongs to the ABC transporter superfamily. Phosphate importer (TC 3.A.1.7) family. In terms of assembly, the complex is composed of two ATP-binding proteins (PstB), two transmembrane proteins (PstC and PstA) and a solute-binding protein (PstS).

The protein resides in the cell inner membrane. The enzyme catalyses phosphate(out) + ATP + H2O = ADP + 2 phosphate(in) + H(+). In terms of biological role, part of the ABC transporter complex PstSACB involved in phosphate import. Responsible for energy coupling to the transport system. In Agrobacterium fabrum (strain C58 / ATCC 33970) (Agrobacterium tumefaciens (strain C58)), this protein is Phosphate import ATP-binding protein PstB.